The chain runs to 335 residues: Ketol-acid reductoisomerase (NADP(+)) 2 (335 aa).

The KARI N-terminal Rossmann domain maps to 1 to 180 (MKTYYEQDAN…GCTRAGVIET (180 aa)). NADP(+) is bound by residues 24–27 (YGSQ), R47, S51, and 81–84 (DEQQ). The active site involves H106. G132 lines the NADP(+) pocket. One can recognise a KARI C-terminal knotted domain in the interval 181–326 (TFQEETETDL…EELREMMSWI (146 aa)). Mg(2+)-binding residues include D189, E193, E225, and E229. Residue S250 coordinates substrate.

It belongs to the ketol-acid reductoisomerase family. Mg(2+) is required as a cofactor.

The catalysed reaction is (2R)-2,3-dihydroxy-3-methylbutanoate + NADP(+) = (2S)-2-acetolactate + NADPH + H(+). It catalyses the reaction (2R,3R)-2,3-dihydroxy-3-methylpentanoate + NADP(+) = (S)-2-ethyl-2-hydroxy-3-oxobutanoate + NADPH + H(+). Its pathway is amino-acid biosynthesis; L-isoleucine biosynthesis; L-isoleucine from 2-oxobutanoate: step 2/4. The protein operates within amino-acid biosynthesis; L-valine biosynthesis; L-valine from pyruvate: step 2/4. Its function is as follows. Involved in the biosynthesis of branched-chain amino acids (BCAA). Catalyzes an alkyl-migration followed by a ketol-acid reduction of (S)-2-acetolactate (S2AL) to yield (R)-2,3-dihydroxy-isovalerate. In the isomerase reaction, S2AL is rearranged via a Mg-dependent methyl migration to produce 3-hydroxy-3-methyl-2-ketobutyrate (HMKB). In the reductase reaction, this 2-ketoacid undergoes a metal-dependent reduction by NADPH to yield (R)-2,3-dihydroxy-isovalerate. This is Ketol-acid reductoisomerase (NADP(+)) 2 from Bacillus anthracis.